Here is a 549-residue protein sequence, read N- to C-terminus: Cation/acetate symporter ActP (549 aa).

The next 13 membrane-spanning stretches (helical) occupy residues 33–53, 77–97, 103–123, 148–168, 183–203, 206–226, 262–282, 303–323, 355–375, 404–424, 428–448, 464–484, and 493–513; these read WQAI…TYWA, LAIA…ALVF, GLIY…LIAE, ILSA…QMVG, IAVV…GMLA, WVQI…AFMV, ISAL…PHIL, GFMG…IMLV, LFLG…VAGL, VSKI…FLFE, IAFM…PIIL, GGWL…TIWV, and IFPY…GIWF.

Belongs to the sodium:solute symporter (SSF) (TC 2.A.21) family.

It localises to the cell inner membrane. Functionally, transports acetate. The sequence is that of Cation/acetate symporter ActP from Salmonella paratyphi C (strain RKS4594).